A 459-amino-acid chain; its full sequence is MFS-type transporter SLC18B1 (459 aa).

An N-acetylmethionine modification is found at methionine 1. Residues 1-10 show a composition bias toward low complexity; it reads MDEAGSPAPA. Positions 1 to 27 are disordered; sequence MDEAGSPAPAGTGGGDDPGGSTRETSR. Residues 1–33 are Cytoplasmic-facing; sequence MDEAGSPAPAGTGGGDDPGGSTRETSRRLSREQ. At serine 21 the chain carries Phosphoserine. A helical membrane pass occupies residues 34 to 54; that stretch reads IFVLVSAASMNLGCMMTYSIL. The Extracellular portion of the chain corresponds to 55 to 70; the sequence is GPFFPKEAEKKGASNT. A helical transmembrane segment spans residues 71–91; sequence MIGMIFGCYALFELLASLVFG. Residues 92–100 are Cytoplasmic-facing; it reads KYLVHIGAK. Residues 101–121 form a helical membrane-spanning segment; sequence FMFIAGMFVSGGVTILFGVLD. Residues 122 to 127 lie on the Extracellular side of the membrane; it reads QLPEGP. A helical transmembrane segment spans residues 128-148; it reads IFIAMCFLVRIVDAIGFGAAI. At 149–167 the chain is on the cytoplasmic side; the sequence is TASSSILAKAFPNNVATVM. Residues 168 to 188 form a helical membrane-spanning segment; the sequence is GSLEVFSGLGLVAGPPLGGLL. Over 189–195 the chain is Extracellular; the sequence is YQSFGYE. The helical transmembrane segment at 196–216 threads the bilayer; sequence VPFIFLGCIVLLMIPLNLYIL. Residues 217 to 235 are Cytoplasmic-facing; sequence PSYAQESDPGKQSFWKLVT. The helical transmembrane segment at 236-256 threads the bilayer; sequence LPKMGLLAFVIISLSSCFGFL. Topologically, residues 257–274 are extracellular; sequence DPTLSLFVMEKFSLSTGY. A helical transmembrane segment spans residues 275–295; that stretch reads VGLVFLGLSLSYAISSPLFGL. The Cytoplasmic portion of the chain corresponds to 296–306; sequence LSDKMPTLRKW. The helical transmembrane segment at 307–327 threads the bilayer; the sequence is LLVFGNLITAGCYMLLGPVPL. Residues 328–333 are Extracellular-facing; sequence LHIKSQ. The helical transmembrane segment at 334 to 354 threads the bilayer; it reads LWLLVLVLVVNGISAGMSIIP. The Cytoplasmic portion of the chain corresponds to 355 to 379; sequence TFPEMLSCAYANGFEDSISTLGLVS. Residues 380-400 form a helical membrane-spanning segment; sequence GLFGAMWSVGAFMGPILGGFL. The Extracellular segment spans residues 401–409; the sequence is CEKIGFEWA. Residues 410–430 traverse the membrane as a helical segment; it reads AAMQGLWTLLSGVSMALFYLW. Over 431-459 the chain is Cytoplasmic; that stretch reads EDSTARRRSKAQNSLGTEEERAALLPNDT. Residues 440–459 are disordered; that stretch reads KAQNSLGTEEERAALLPNDT.

This sequence belongs to the major facilitator superfamily. As to expression, widely expressed, with highest expression in the lung, pancreas and kidney. High expression in the CNS, particularly in the hypothalamus, the thalamus and the cerebellum. In the forebrain, abundantly expressed in the telencephalon, especially in the cerebral cortex layers, except layer 1, as well as in the induseum griseum, the piriform area, the taenia tecta, dorsal part and in the entorhinal area, lateral part. Lower levels in the bed anterior olfactory nucleus, posteroventral part and in layer two of the olfactory tubercle. In the amygdala, high levels observed in the intercalated nucleus and the medial nucleus. In the diencephalon, expressed in the nuclei in both the hypothalamus and thalamus. Among the hypothalamic areas, strongest expression in the arcuate nucleus and in the ventromedial nucleus, as well as in the suprachiasmatic nucleus, anterior nucleus, especially in its central part, and in the magnocellular division of the paraventricular nucleus. In the thalamus, highest levels in the medial habenula. Expression also observed in the paraventricular thalamic nucleus, parataenial nucleus, central medial nucleus, intermediodorsal nucleus and lateral dorsal nucleus. In the hindbrain, detected in the cerebellum and in the pons. In the midbrain and the medulla, expression levels were modest. In the midbrain, highest expression in the periaqueductal gray and all subdivisions of the interpeduncular nucleus, except for the caudal part. In the pons, the strongest labeling was seen in the nucleus incertus and in the tegmental nucleus. Expressed in bone marrow-derived mast cells (at protein level).

Its subcellular location is the cytoplasmic vesicle. The protein localises to the secretory vesicle membrane. The protein resides in the secretory vesicle. It is found in the synaptic vesicle membrane. It catalyses the reaction spermine(in) + n H(+)(out) = spermine(out) + n H(+)(in). The catalysed reaction is spermidine(in) + n H(+)(out) = spermidine(out) + n H(+)(in). The enzyme catalyses serotonin(in) + n H(+)(out) = serotonin(out) + n H(+)(in). Proton-coupled polyamine antiporter involved in the translocation of polyamines from cytosol into secretory vesicles prior to their release via exocytosis. Uses the electrochemical proton gradient generated by a V-type proton-pumping ATPase to couple the efflux of protons with the uptake of a polyamine molecule. Facilitates vesicular storage of spermine and spermidine in astrocytes with an impact on glutamatergic neuronal transmission and memory formation. Upon antigen stimulation, regulates polyamine accumulation and release in mast cell secretory granules, which in turn potentiates mast cell degranulation and histamine secretion. This Mus musculus (Mouse) protein is MFS-type transporter SLC18B1.